Here is a 285-residue protein sequence, read N- to C-terminus: V-set and transmembrane domain-containing protein 2B (285 aa).

The signal sequence occupies residues Met-1–Ala-28. In terms of domain architecture, Ig-like V-type spans Thr-29–Gln-143. The Extracellular portion of the chain corresponds to Thr-29 to Ser-263. A disulfide bridge connects residues Cys-49 and Cys-127. The disordered stretch occupies residues Ala-160 to His-225. 2 stretches are compositionally biased toward low complexity: residues Ala-176–Val-189 and Pro-208–His-225. The helical transmembrane segment at Ala-264–Gly-284 threads the bilayer. Position 285 (His-285) is a topological domain, cytoplasmic.

The protein resides in the membrane. The protein is V-set and transmembrane domain-containing protein 2B (Vstm2b) of Mus musculus (Mouse).